A 555-amino-acid polypeptide reads, in one-letter code: Hydroxylamine reductase (555 aa).

Residues Cys-3, Cys-6, Cys-18, and Cys-25 each contribute to the [4Fe-4S] cluster site. Residues His-252, Glu-276, Cys-320, Cys-407, Cys-435, Cys-460, Glu-494, and Lys-496 each coordinate hybrid [4Fe-2O-2S] cluster. Cys-407 bears the Cysteine persulfide mark.

This sequence belongs to the HCP family. It depends on [4Fe-4S] cluster as a cofactor. Hybrid [4Fe-2O-2S] cluster is required as a cofactor.

It localises to the cytoplasm. The enzyme catalyses A + NH4(+) + H2O = hydroxylamine + AH2 + H(+). Its function is as follows. Catalyzes the reduction of hydroxylamine to form NH(3) and H(2)O. This is Hydroxylamine reductase from Burkholderia ambifaria (strain MC40-6).